Here is a 319-residue protein sequence, read N- to C-terminus: DNA-directed RNA polymerase subunit alpha (319 aa).

Residues 1 to 227 (MKEFIFPMKI…KHMNMLTNIS (227 aa)) form an alpha N-terminal domain (alpha-NTD) region. The interval 242 to 319 (LMEKLTFSIE…NIGEQRSSEV (78 aa)) is alpha C-terminal domain (alpha-CTD).

It belongs to the RNA polymerase alpha chain family. As to quaternary structure, homodimer. The RNAP catalytic core consists of 2 alpha, 1 beta, 1 beta' and 1 omega subunit. When a sigma factor is associated with the core the holoenzyme is formed, which can initiate transcription.

The catalysed reaction is RNA(n) + a ribonucleoside 5'-triphosphate = RNA(n+1) + diphosphate. Its function is as follows. DNA-dependent RNA polymerase catalyzes the transcription of DNA into RNA using the four ribonucleoside triphosphates as substrates. The polypeptide is DNA-directed RNA polymerase subunit alpha (Hydrogenobaculum sp. (strain Y04AAS1)).